The chain runs to 378 residues: UDP-N-acetylglucosamine--N-acetylmuramyl-(pentapeptide) pyrophosphoryl-undecaprenol N-acetylglucosamine transferase (378 aa).

UDP-N-acetyl-alpha-D-glucosamine-binding positions include 14–16 (TGG), N125, R165, S193, and Q293.

The protein belongs to the glycosyltransferase 28 family. MurG subfamily.

The protein localises to the cell inner membrane. The enzyme catalyses di-trans,octa-cis-undecaprenyl diphospho-N-acetyl-alpha-D-muramoyl-L-alanyl-D-glutamyl-meso-2,6-diaminopimeloyl-D-alanyl-D-alanine + UDP-N-acetyl-alpha-D-glucosamine = di-trans,octa-cis-undecaprenyl diphospho-[N-acetyl-alpha-D-glucosaminyl-(1-&gt;4)]-N-acetyl-alpha-D-muramoyl-L-alanyl-D-glutamyl-meso-2,6-diaminopimeloyl-D-alanyl-D-alanine + UDP + H(+). Its pathway is cell wall biogenesis; peptidoglycan biosynthesis. In terms of biological role, cell wall formation. Catalyzes the transfer of a GlcNAc subunit on undecaprenyl-pyrophosphoryl-MurNAc-pentapeptide (lipid intermediate I) to form undecaprenyl-pyrophosphoryl-MurNAc-(pentapeptide)GlcNAc (lipid intermediate II). The chain is UDP-N-acetylglucosamine--N-acetylmuramyl-(pentapeptide) pyrophosphoryl-undecaprenol N-acetylglucosamine transferase from Bartonella quintana (strain Toulouse) (Rochalimaea quintana).